The chain runs to 127 residues: Modulator protein MzrA (127 aa).

Residues 1 to 10 (MQIPRMSLRQ) are Cytoplasmic-facing. The helical transmembrane segment at 11-31 (LAWSGAVLLLVGTLLLAWSAV) threads the bilayer. Topologically, residues 32–127 (RQQESTLAIR…RLRDNSHRFG (96 aa)) are periplasmic.

The protein belongs to the MzrA family. As to quaternary structure, interacts with EnvZ.

The protein localises to the cell inner membrane. Functionally, modulates the activity of the EnvZ/OmpR two-component regulatory system, probably by directly modulating EnvZ enzymatic activity and increasing stability of phosphorylated OmpR. Links the two-component systems CpxA/CpxR and EnvZ/OmpR. The polypeptide is Modulator protein MzrA (Escherichia coli (strain K12)).